The sequence spans 96 residues: Muconolactone Delta-isomerase (96 aa).

This sequence belongs to the muconolactone Delta-isomerase family. Homodecamer.

It carries out the reaction (S)-muconolactone = (4,5-dihydro-5-oxofuran-2-yl)-acetate. It functions in the pathway aromatic compound metabolism; beta-ketoadipate pathway; 5-oxo-4,5-dihydro-2-furylacetate from catechol: step 3/3. This chain is Muconolactone Delta-isomerase (catC), found in Pseudomonas aeruginosa (strain ATCC 15692 / DSM 22644 / CIP 104116 / JCM 14847 / LMG 12228 / 1C / PRS 101 / PAO1).